Here is a 304-residue protein sequence, read N- to C-terminus: uncharacterized protein (304 aa).

This is an uncharacterized protein from Acanthamoeba polyphaga (Amoeba).